The sequence spans 288 residues: Mediator of RNA polymerase II transcription subunit 8 (288 aa).

Residues 4-58 (EELKQLELLRNRFAQLTSNLGSLRTSVSNSNPLPTYESLQASVNILQANIRSIQD) are a coiled coil. 3 disordered regions span residues 122 to 150 (GGVH…APQD), 191 to 245 (VRTG…GGGM), and 266 to 288 (PGNV…APPR). Composition is skewed to acidic residues over residues 131–148 (DYDD…DDAP) and 200–221 (EESE…EDEA). Residues 180–228 (TAEERAAGIENVRTGLRQTLEESEDDDEDEEEEEEDEEEDEAAAAAGNA) adopt a coiled-coil conformation. The span at 227 to 245 (NAGGLATGAGGSAAAGGGM) shows a compositional bias: gly residues.

The protein belongs to the Mediator complex subunit 8 family. Component of the Mediator complex.

The protein localises to the nucleus. Its function is as follows. Component of the Mediator complex, a coactivator involved in the regulated transcription of nearly all RNA polymerase II-dependent genes. Mediator functions as a bridge to convey information from gene-specific regulatory proteins to the basal RNA polymerase II transcription machinery. Mediator is recruited to promoters by direct interactions with regulatory proteins and serves as a scaffold for the assembly of a functional preinitiation complex with RNA polymerase II and the general transcription factors. This is Mediator of RNA polymerase II transcription subunit 8 (MED8) from Chaetomium globosum (strain ATCC 6205 / CBS 148.51 / DSM 1962 / NBRC 6347 / NRRL 1970) (Soil fungus).